A 546-amino-acid polypeptide reads, in one-letter code: NRAMP-like transporter smf-2 (546 aa).

Topologically, residues 1–42 (MPGFQNANISDLAPPAREKTFDDTIAVKIPEDEKNTWFSWRK) are cytoplasmic. A helical membrane pass occupies residues 43-63 (LWAFTGPGFLMSIAYLDPGNI). At 64-70 (ESDLQAG) the chain is on the extracellular side. A helical membrane pass occupies residues 71–91 (AQAEYKLLWVLLVSHIVGMLL). Residues 92 to 119 (QRMSARLGVVSGKHMAEIAYDYYPLVPR) lie on the Cytoplasmic side of the membrane. The helical transmembrane segment at 120-140 (IILWLMIEIAIVCSDMQEVIG) threads the bilayer. The Extracellular segment spans residues 141 to 152 (TAIAIYLLSSGK). A helical membrane pass occupies residues 153–173 (IPLLVGVLITILDTFTFLFID). Residues 174–181 (RYGIRKLE) lie on the Cytoplasmic side of the membrane. A helical transmembrane segment spans residues 182–202 (FIFVALISTMAISFGYEFVVM). Residues 203–228 (KPVLTKVLTGTVVPWCSGCGKEEIIT) are Extracellular-facing. The helical transmembrane segment at 229–249 (AISIFGAVIMPHNFYLHSALV) threads the bilayer. Residues 250-270 (KSRKVDRSSKTRIAEANKYFS) are Cytoplasmic-facing. The helical transmembrane segment at 271 to 291 (IESAFALSVSFFINLFVLSVF) threads the bilayer. Residues 292–334 (ARGLYQKTNGDVNSMCLSHNDIPDSNVFPNNTSSVTVDLFQGG) are Extracellular-facing. An N-linked (GlcNAc...) asparagine glycan is attached at N321. The chain crosses the membrane as a helical span at residues 335–355 (IYLGCQFGLFAMIIWAIGIFA). Over 356–386 (AGQSSTMTGTYTGQFVMEGFVRISWPKWKRV) the chain is Cytoplasmic. The chain crosses the membrane as a helical span at residues 387–407 (LITRAVAITPTLILCIKAHGI). Residues 408–415 (KNLTGMND) are Extracellular-facing. The N-linked (GlcNAc...) asparagine glycan is linked to N409. Residues 416 to 436 (FLNCVQMVQLPFALIPMITFT) form a helical membrane-spanning segment. Topologically, residues 437 to 453 (SSKRIMHNFRTSKPLQY) are cytoplasmic. A helical transmembrane segment spans residues 454-474 (FSIICGIITIGINVYFIFQYV). Residues 475-483 (TENFGTGWL) lie on the Extracellular side of the membrane. The chain crosses the membrane as a helical span at residues 484-504 (IFVIIGPFTLLYIAFILYLAI). The Cytoplasmic segment spans residues 505–546 (YCLVACELMNDTVNLPGFDFHRTLELDAPWITETFVVNDVYF).

The protein belongs to the NRAMP family. Expressed in dopaminergic neurons (at protein level). Primarily expressed in mc1, mc2 and mc3 epithelial cells of the pharynx and vpil-6 pharyngeal-intestinal valve cells displaying an anterior-posterior expression gradient. Expressed in gonad sheath cells.

It localises to the apical cell membrane. The protein resides in the cytoplasmic vesicle membrane. Functionally, probable divalent metal ion transporter which regulates Mn(2+) uptake. This is NRAMP-like transporter smf-2 from Caenorhabditis elegans.